The sequence spans 117 residues: Prefoldin subunit beta (117 aa).

It belongs to the prefoldin subunit beta family. As to quaternary structure, heterohexamer of two alpha and four beta subunits.

The protein resides in the cytoplasm. Molecular chaperone capable of stabilizing a range of proteins. Seems to fulfill an ATP-independent, HSP70-like function in archaeal de novo protein folding. The polypeptide is Prefoldin subunit beta (Pyrococcus furiosus (strain ATCC 43587 / DSM 3638 / JCM 8422 / Vc1)).